The chain runs to 210 residues: Germin-like protein subfamily 3 member 4 (210 aa).

The N-terminal stretch at 1-18 (MKFFVVIVFCAIFLSVSG) is a signal peptide. Cys-27 and Cys-44 are oxidised to a cystine. The 133-residue stretch at 58–190 (TKLTEAGDTD…VFGIDQEHIK (133 aa)) folds into the Cupin type-1 domain. Residue Asn-73 is glycosylated (N-linked (GlcNAc...) asparagine). Residues His-106, His-108, Glu-113, and His-152 each coordinate Mn(2+).

This sequence belongs to the germin family. Oligomer (believed to be a pentamer but probably hexamer).

It is found in the secreted. It localises to the extracellular space. The protein localises to the apoplast. Functionally, may play a role in plant defense. Probably has no oxalate oxidase activity even if the active site is conserved. This is Germin-like protein subfamily 3 member 4 from Arabidopsis thaliana (Mouse-ear cress).